A 165-amino-acid polypeptide reads, in one-letter code: Large ribosomal subunit protein uL10 (165 aa).

This sequence belongs to the universal ribosomal protein uL10 family. In terms of assembly, part of the ribosomal stalk of the 50S ribosomal subunit. The N-terminus interacts with L11 and the large rRNA to form the base of the stalk. The C-terminus forms an elongated spine to which L12 dimers bind in a sequential fashion forming a multimeric L10(L12)X complex.

Functionally, forms part of the ribosomal stalk, playing a central role in the interaction of the ribosome with GTP-bound translation factors. The polypeptide is Large ribosomal subunit protein uL10 (Enterobacter sp. (strain 638)).